Here is a 151-residue protein sequence, read N- to C-terminus: SsrA-binding protein (151 aa).

It belongs to the SmpB family.

The protein resides in the cytoplasm. Its function is as follows. Required for rescue of stalled ribosomes mediated by trans-translation. Binds to transfer-messenger RNA (tmRNA), required for stable association of tmRNA with ribosomes. tmRNA and SmpB together mimic tRNA shape, replacing the anticodon stem-loop with SmpB. tmRNA is encoded by the ssrA gene; the 2 termini fold to resemble tRNA(Ala) and it encodes a 'tag peptide', a short internal open reading frame. During trans-translation Ala-aminoacylated tmRNA acts like a tRNA, entering the A-site of stalled ribosomes, displacing the stalled mRNA. The ribosome then switches to translate the ORF on the tmRNA; the nascent peptide is terminated with the 'tag peptide' encoded by the tmRNA and targeted for degradation. The ribosome is freed to recommence translation, which seems to be the essential function of trans-translation. In Chlamydia trachomatis serovar A (strain ATCC VR-571B / DSM 19440 / HAR-13), this protein is SsrA-binding protein.